Reading from the N-terminus, the 477-residue chain is Monocarboxylate transporter 12-B (477 aa).

Residues 1–9 (MAQEKKKGG) are Cytoplasmic-facing. The next 12 helical transmembrane spans lie at 10–30 (VLPP…VVTV), 58–78 (AWIH…GSLI), 86–106 (IAVI…SFAT), 116–136 (GLLT…MVGI), 148–168 (IAMS…QLLI), 178–198 (LILG…RPII), 253–273 (FLVL…PFVY), 289–309 (AFLM…FGWL), 320–340 (NICY…IPLL), 344–364 (VWLV…VALI), 383–403 (VVYF…GWLV), and 413–433 (FFLS…VAII). The Cytoplasmic segment spans residues 434–477 (RYCQRNQKKNSLSKIPKLVSCEGKQVDYYPPKNKDLMLIIPATS).

The protein belongs to the major facilitator superfamily. Monocarboxylate porter (TC 2.A.1.13) family.

The protein resides in the cell membrane. The protein localises to the basolateral cell membrane. The enzyme catalyses creatine(in) = creatine(out). The catalysed reaction is guanidinoacetate(in) = guanidinoacetate(out). In terms of biological role, functions as a transporter for creatine and as well for its precursor guanidinoacetate. Transport of creatine and GAA is independent of resting membrane potential and extracellular Na(+), Cl(-), or pH. Contributes to the process of creatine biosynthesis and distribution. The polypeptide is Monocarboxylate transporter 12-B (slc16a12b) (Danio rerio (Zebrafish)).